We begin with the raw amino-acid sequence, 274 residues long: Exosome complex component RRP40 (274 aa).

An N-acetylalanine modification is found at A2. A Glycyl lysine isopeptide (Lys-Gly) (interchain with G-Cter in SUMO2) cross-link involves residue K150.

The protein belongs to the RRP40 family. In terms of assembly, component of the RNA exosome core complex (Exo-9), composed of EXOSC1, EXOSC2, EXOSC3, EXOSC4, EXOSC5, EXOSC6, EXOSC7, EXOSC8 and EXOSC9; within the complex interacts with EXOSC5 and EXOSC9. The catalytically inactive RNA exosome core complex (Exo-9) associates with the catalytic subunit EXOSC10/RRP6. Exo-9 may associate with DIS3 to form the nucleolar exosome complex, or DIS3L to form the cytoplasmic exosome complex. Exo-9 is formed by a hexameric base ring consisting of the heterodimers EXOSC4-EXOSC9, EXOSC5-EXOSC8 and EXOSC6-EXOSC7, and a cap ring consisting of EXOSC1, EXOSC2 and EXOSC3. The RNA exosome complex associates with cofactors C1D/RRP47, MPHOSPH6/MPP6 and MTREX/MTR4. Interacts with MPHOSPH6/MPP6; the interaction is direct. Interacts with GTPBP1. Interacts with ZC3HAV1. Interacts with DDX17 only in the presence of ZC3HAV1 in an RNA-independent manner. Interacts with DHX36; this interaction occurs in a RNase-insensitive manner. Interacts with HBS1L isoform 2.

Its subcellular location is the cytoplasm. It is found in the nucleus. It localises to the nucleolus. In terms of biological role, non-catalytic component of the RNA exosome complex which has 3'-&gt;5' exoribonuclease activity and participates in a multitude of cellular RNA processing and degradation events. In the nucleus, the RNA exosome complex is involved in proper maturation of stable RNA species such as rRNA, snRNA and snoRNA, in the elimination of RNA processing by-products and non-coding 'pervasive' transcripts, such as antisense RNA species and promoter-upstream transcripts (PROMPTs), and of mRNAs with processing defects, thereby limiting or excluding their export to the cytoplasm. The RNA exosome may be involved in Ig class switch recombination (CSR) and/or Ig variable region somatic hypermutation (SHM) by targeting AICDA deamination activity to transcribed dsDNA substrates. In the cytoplasm, the RNA exosome complex is involved in general mRNA turnover and specifically degrades inherently unstable mRNAs containing AU-rich elements (AREs) within their 3' untranslated regions, and in RNA surveillance pathways, preventing translation of aberrant mRNAs. It seems to be involved in degradation of histone mRNA. The catalytic inactive RNA exosome core complex of 9 subunits (Exo-9) is proposed to play a pivotal role in the binding and presentation of RNA for ribonucleolysis, and to serve as a scaffold for the association with catalytic subunits and accessory proteins or complexes. EXOSC3 as peripheral part of the Exo-9 complex stabilizes the hexameric ring of RNase PH-domain subunits through contacts with EXOSC9 and EXOSC5. In Mus musculus (Mouse), this protein is Exosome complex component RRP40 (Exosc3).